The primary structure comprises 224 residues: MASSSSLYLLAALLALASWQAIAFDPSPLQDFCVADMKSPVRVNGFPCKNPMEVNSDDFFNAAKFDMPRSTMNKVGSNVTNLNVLNFPGLNTLGISLARIDYAPLGVNPPHIHPRATELLTVLEGTLYVGFVTSNPNRLFSKVVHKGDTFVFPKAMIHFQMNLDHNKPAVAQSSLNSQNPGVITIASAVFGSKPPISDDVLTKAFQVEKKVIDWLKSQFWESNY.

Residues 1 to 23 (MASSSSLYLLAALLALASWQAIA) form the signal peptide. A disulfide bridge connects residues Cys-33 and Cys-48. The Cupin type-1 domain occupies 70 to 213 (STMNKVGSNV…AFQVEKKVID (144 aa)). N-linked (GlcNAc...) asparagine glycosylation is present at Asn-78. Residues His-111, His-113, Glu-118, and His-158 each coordinate Mn(2+).

Belongs to the germin family. Oligomer (believed to be a pentamer but probably hexamer).

It is found in the secreted. The protein localises to the extracellular space. The protein resides in the apoplast. Its function is as follows. Plays a role in broad-spectrum disease resistance. Probably has no oxalate oxidase activity even if the active site is conserved. In Oryza sativa subsp. japonica (Rice), this protein is Germin-like protein 8-4 (GER1).